Reading from the N-terminus, the 666-residue chain is UvrABC system protein B (666 aa).

In terms of domain architecture, Helicase ATP-binding spans 28-171 (NNINQGIQRQ…YLHVGELIEF (144 aa)). 41–48 (GATGTGKT) is a binding site for ATP. Positions 94-117 (YFDYYQPEAYKPITDTYIEKDSVT) match the Beta-hairpin motif. A Helicase C-terminal domain is found at 436–598 (QIDDLINELM…IIPKTIIKPI (163 aa)). The UVR domain occupies 624-659 (NQKIKELKKKMEEAAKKREYEVAAQYRDMIVELEAI).

It belongs to the UvrB family. As to quaternary structure, forms a heterotetramer with UvrA during the search for lesions. Interacts with UvrC in an incision complex.

Its subcellular location is the cytoplasm. Functionally, the UvrABC repair system catalyzes the recognition and processing of DNA lesions. A damage recognition complex composed of 2 UvrA and 2 UvrB subunits scans DNA for abnormalities. Upon binding of the UvrA(2)B(2) complex to a putative damaged site, the DNA wraps around one UvrB monomer. DNA wrap is dependent on ATP binding by UvrB and probably causes local melting of the DNA helix, facilitating insertion of UvrB beta-hairpin between the DNA strands. Then UvrB probes one DNA strand for the presence of a lesion. If a lesion is found the UvrA subunits dissociate and the UvrB-DNA preincision complex is formed. This complex is subsequently bound by UvrC and the second UvrB is released. If no lesion is found, the DNA wraps around the other UvrB subunit that will check the other stand for damage. The sequence is that of UvrABC system protein B from Ureaplasma parvum serovar 3 (strain ATCC 27815 / 27 / NCTC 11736).